Here is a 537-residue protein sequence, read N- to C-terminus: Prolyl 4-hydroxylase subunit alpha-2 (537 aa).

The first 23 residues, 1 to 23 (MKLQVLVLVLLMSWFGVLSWVQA), serve as a signal peptide directing secretion. Asparagine 117 carries N-linked (GlcNAc...) asparagine glycosylation. The stretch at 209-242 (SLVLDYLSYAVFQLGDLHRAVELTRRLLSLDPSH) is one TPR repeat. N-linked (GlcNAc...) asparagine glycosylation is present at asparagine 266. The 109-residue stretch at 414 to 522 (TAELLQVANY…KWVSNKWFHE (109 aa)) folds into the Fe2OG dioxygenase domain. 2 residues coordinate Fe cation: histidine 432 and aspartate 434. Lysine 482 is subject to N6-succinyllysine. Histidine 503 lines the Fe cation pocket. Residue lysine 513 participates in 2-oxoglutarate binding.

The protein belongs to the P4HA family. As to quaternary structure, heterotetramer of two alpha-2 chains and two beta chains (P4HB) (the beta chain is the multi-functional PDI), where P4HB plays the role of a structural subunit; this tetramer catalyzes the formation of 4-hydroxyproline in collagen. The cofactor is Fe(2+). It depends on L-ascorbate as a cofactor. In terms of tissue distribution, expressed at least in brain, heart and lung.

The protein resides in the endoplasmic reticulum lumen. The enzyme catalyses L-prolyl-[collagen] + 2-oxoglutarate + O2 = trans-4-hydroxy-L-prolyl-[collagen] + succinate + CO2. Inhibited by poly(L-proline) only at very high concentrations. Catalyzes the post-translational formation of 4-hydroxyproline in -Xaa-Pro-Gly- sequences in collagens and other proteins. This Mus musculus (Mouse) protein is Prolyl 4-hydroxylase subunit alpha-2 (P4ha2).